The primary structure comprises 293 residues: Elongation factor Ts (293 aa).

The involved in Mg(2+) ion dislocation from EF-Tu stretch occupies residues 79 to 82; it reads TDFV.

This sequence belongs to the EF-Ts family.

It localises to the cytoplasm. In terms of biological role, associates with the EF-Tu.GDP complex and induces the exchange of GDP to GTP. It remains bound to the aminoacyl-tRNA.EF-Tu.GTP complex up to the GTP hydrolysis stage on the ribosome. In Halalkalibacterium halodurans (strain ATCC BAA-125 / DSM 18197 / FERM 7344 / JCM 9153 / C-125) (Bacillus halodurans), this protein is Elongation factor Ts (tsf).